A 113-amino-acid polypeptide reads, in one-letter code: UPF0342 protein SPy_0811/M5005_Spy0626 (113 aa).

It belongs to the UPF0342 family.

The chain is UPF0342 protein SPy_0811/M5005_Spy0626 from Streptococcus pyogenes serotype M1.